The primary structure comprises 477 residues: 3-isopropylmalate dehydratase large subunit (477 aa).

Residues C352, C413, and C416 each contribute to the [4Fe-4S] cluster site.

This sequence belongs to the aconitase/IPM isomerase family. LeuC type 1 subfamily. As to quaternary structure, heterodimer of LeuC and LeuD. [4Fe-4S] cluster serves as cofactor.

The enzyme catalyses (2R,3S)-3-isopropylmalate = (2S)-2-isopropylmalate. The protein operates within amino-acid biosynthesis; L-leucine biosynthesis; L-leucine from 3-methyl-2-oxobutanoate: step 2/4. Functionally, catalyzes the isomerization between 2-isopropylmalate and 3-isopropylmalate, via the formation of 2-isopropylmaleate. The protein is 3-isopropylmalate dehydratase large subunit of Pseudomonas putida (strain GB-1).